The following is a 380-amino-acid chain: Protein arginine N-methyltransferase PRMT10 (380 aa).

The 332-residue stretch at 26-357 (EVDFANYFCT…KENHRLMDME (332 aa)) folds into the SAM-dependent MTase PRMT-type domain. 5 residues coordinate S-adenosyl-L-methionine: Gln-42, Arg-51, Gly-75, Glu-97, and Glu-126. Active-site residues include Glu-140 and Glu-149. The interval 187-227 (ENKMEDLEIAMHDWNLFVEDTESYYGVNMNVLTKAYRAEHE) is dimerization arm.

This sequence belongs to the class I-like SAM-binding methyltransferase superfamily. Protein arginine N-methyltransferase family. Ring-like homodimer.

It catalyses the reaction L-arginyl-[protein] + 2 S-adenosyl-L-methionine = N(omega),N(omega)-dimethyl-L-arginyl-[protein] + 2 S-adenosyl-L-homocysteine + 2 H(+). Its function is as follows. Methylates (mono and asymmetric dimethylation) the guanidino nitrogens of arginyl residues in some proteins. In Oryza sativa subsp. japonica (Rice), this protein is Protein arginine N-methyltransferase PRMT10 (PRMT10).